Here is a 120-residue protein sequence, read N- to C-terminus: MSLSRQSCGRVVRVTGRASARGLIFVIQVYRHMLSPLRPASCRFVPTCSQYAVDALTEYGLLRGSWLTMIRLAKCGPWHRGGWDPIPEGLTTGRSCQTDVDGANDDWNPASKRGERESFV.

Residues 93–120 (GRSCQTDVDGANDDWNPASKRGERESFV) are disordered.

This sequence belongs to the UPF0161 family.

The protein localises to the cell membrane. Could be involved in insertion of integral membrane proteins into the membrane. The sequence is that of Putative membrane protein insertion efficiency factor from Mycobacterium bovis (strain ATCC BAA-935 / AF2122/97).